The following is a 298-amino-acid chain: Ribonuclease HII (298 aa).

The tract at residues 1–57 (MIREPQKSAKAASKSSAPRARSSVAKATSTKATSSKAASSKAAPSKAGADAGAAKPR) is disordered. Residues 8–55 (SAKAASKSSAPRARSSVAKATSTKATSSKAASSKAAPSKAGADAGAAK) are compositionally biased toward low complexity. The RNase H type-2 domain occupies 85 to 273 (WPVAGCDEAG…VAAAWRKIEG (189 aa)). Residues Asp91, Glu92, and Asp182 each coordinate a divalent metal cation.

This sequence belongs to the RNase HII family. Mn(2+) serves as cofactor. The cofactor is Mg(2+).

The protein resides in the cytoplasm. The enzyme catalyses Endonucleolytic cleavage to 5'-phosphomonoester.. In terms of biological role, endonuclease that specifically degrades the RNA of RNA-DNA hybrids. In Rhodopseudomonas palustris (strain BisB5), this protein is Ribonuclease HII.